A 213-amino-acid polypeptide reads, in one-letter code: ATP phosphoribosyltransferase (213 aa).

Belongs to the ATP phosphoribosyltransferase family. Short subfamily. Heteromultimer composed of HisG and HisZ subunits.

It is found in the cytoplasm. It catalyses the reaction 1-(5-phospho-beta-D-ribosyl)-ATP + diphosphate = 5-phospho-alpha-D-ribose 1-diphosphate + ATP. Its pathway is amino-acid biosynthesis; L-histidine biosynthesis; L-histidine from 5-phospho-alpha-D-ribose 1-diphosphate: step 1/9. In terms of biological role, catalyzes the condensation of ATP and 5-phosphoribose 1-diphosphate to form N'-(5'-phosphoribosyl)-ATP (PR-ATP). Has a crucial role in the pathway because the rate of histidine biosynthesis seems to be controlled primarily by regulation of HisG enzymatic activity. The chain is ATP phosphoribosyltransferase from Listeria welshimeri serovar 6b (strain ATCC 35897 / DSM 20650 / CCUG 15529 / CIP 8149 / NCTC 11857 / SLCC 5334 / V8).